Consider the following 114-residue polypeptide: uncharacterized protein (114 aa).

This is an uncharacterized protein from Sputnik virophage.